The chain runs to 157 residues: Small ribosomal subunit protein uS7 (157 aa).

This sequence belongs to the universal ribosomal protein uS7 family. Part of the 30S ribosomal subunit. Contacts proteins S9 and S11.

In terms of biological role, one of the primary rRNA binding proteins, it binds directly to 16S rRNA where it nucleates assembly of the head domain of the 30S subunit. Is located at the subunit interface close to the decoding center, probably blocks exit of the E-site tRNA. This Bdellovibrio bacteriovorus (strain ATCC 15356 / DSM 50701 / NCIMB 9529 / HD100) protein is Small ribosomal subunit protein uS7.